Reading from the N-terminus, the 377-residue chain is Actin-related protein 2/3 complex subunit 1 (377 aa).

5 WD repeats span residues 9–48 (ILPKPSYEHAFNSQRTEFVTTTATNQVELYEQDGNGWKHA), 53–92 (DHDKIVTCVDWAPKSNRIVTCSQDRNAYVYEKRPDGTWKQ), 98–139 (RLNR…WVSK), 144–183 (PLRSTILSLDWHPNNVLLAAGCADRKAYVLSAYVRDVDAK), and 203–242 (PSGGWVHAVGFSPSGNALAYAGHDSSVTIAYPSAPEQPPR). The disordered stretch occupies residues 293 to 313 (GTSKTSFTHTGNTGEGREEEG). The WD 6 repeat unit spans residues 342 to 376 (VHQNMIATLRPYAGTPGNITAFTSSGTDGRVVLWT).

This sequence belongs to the WD repeat ARPC1 family. As to quaternary structure, component of the Arp2/3 complex composed of arp2, act2, arc1/p41-ARC, arc2/p34-ARC, arc3/p21-ARC, arc4/p20-ARC and arc5/p16-ARC.

It localises to the cytoplasm. Its subcellular location is the cytoskeleton. The protein resides in the actin patch. In terms of biological role, functions as a component of the Arp2/3 complex which is involved in regulation of actin polymerization and together with an activating nucleation-promoting factor (NPF) mediates the formation of branched actin networks. The chain is Actin-related protein 2/3 complex subunit 1 (arc1) from Schizosaccharomyces pombe (strain 972 / ATCC 24843) (Fission yeast).